The sequence spans 460 residues: Serine--tRNA ligase (460 aa).

255–257 (TAE) is a binding site for L-serine. ATP contacts are provided by residues 286–288 (RKE) and valine 302. Glutamate 309 contributes to the L-serine binding site. ATP is bound at residue 373 to 376 (EMVS). Position 409 (threonine 409) interacts with L-serine.

The protein belongs to the class-II aminoacyl-tRNA synthetase family. Type-1 seryl-tRNA synthetase subfamily. As to quaternary structure, homodimer. The tRNA molecule binds across the dimer.

The protein localises to the cytoplasm. It carries out the reaction tRNA(Ser) + L-serine + ATP = L-seryl-tRNA(Ser) + AMP + diphosphate + H(+). The enzyme catalyses tRNA(Sec) + L-serine + ATP = L-seryl-tRNA(Sec) + AMP + diphosphate + H(+). The protein operates within aminoacyl-tRNA biosynthesis; selenocysteinyl-tRNA(Sec) biosynthesis; L-seryl-tRNA(Sec) from L-serine and tRNA(Sec): step 1/1. In terms of biological role, catalyzes the attachment of serine to tRNA(Ser). Is also able to aminoacylate tRNA(Sec) with serine, to form the misacylated tRNA L-seryl-tRNA(Sec), which will be further converted into selenocysteinyl-tRNA(Sec). The polypeptide is Serine--tRNA ligase (Hyperthermus butylicus (strain DSM 5456 / JCM 9403 / PLM1-5)).